An 853-amino-acid polypeptide reads, in one-letter code: DNA mismatch repair protein MutS (853 aa).

613–620 provides a ligand contact to ATP; that stretch reads GPNMGGKS.

It belongs to the DNA mismatch repair MutS family.

In terms of biological role, this protein is involved in the repair of mismatches in DNA. It is possible that it carries out the mismatch recognition step. This protein has a weak ATPase activity. The polypeptide is DNA mismatch repair protein MutS (Vibrio parahaemolyticus serotype O3:K6 (strain RIMD 2210633)).